A 260-amino-acid chain; its full sequence is Methanethiol S-methyltransferase (260 aa).

Transmembrane regions (helical) follow at residues 27–47 (CYLF…GIGV), 55–75 (PGIT…LFAA), 107–127 (CLVL…VWNV), 134–154 (GLLI…TFLI), and 196–216 (FLIA…FAIL).

Belongs to the nurim family.

Its subcellular location is the membrane. The enzyme catalyses methanethiol + S-adenosyl-L-methionine = dimethyl sulfide + S-adenosyl-L-homocysteine + H(+). In terms of biological role, catalyzes the methylation of methanethiol (MeSH) to yield dimethylsulphide (DMS). In Pseudomonas sp. (strain GM41(2012)), this protein is Methanethiol S-methyltransferase.